A 525-amino-acid chain; its full sequence is Squalene epoxidase 3 (525 aa).

Residues 9–29 traverse the membrane as a helical segment; sequence HCILTTTFVASLFAFLLLYVL. FAD contacts are provided by residues 64–65, 84–85, Arg-92, Arg-163, Val-179, Asp-341, and Met-354; these read VA and ER. The next 2 helical transmembrane spans lie at 452–472 and 477–497; these read LVLHFFAVAIFGVGRLLVPLP and LWLGARLISSASGIIFPIIKA.

Belongs to the squalene monooxygenase family. Requires FAD as cofactor. In terms of tissue distribution, expressed in seedlings, leaves, stems, inflorescences and siliques.

The protein localises to the membrane. The catalysed reaction is squalene + reduced [NADPH--hemoprotein reductase] + O2 = (S)-2,3-epoxysqualene + oxidized [NADPH--hemoprotein reductase] + H2O + H(+). It participates in terpene metabolism; lanosterol biosynthesis; lanosterol from farnesyl diphosphate: step 2/3. In terms of biological role, catalyzes the stereospecific oxidation of squalene to (S)-2,3-epoxysqualene, and is considered to be a rate-limiting enzyme in steroid biosynthesis. Can produce not only oxidosqualene, but also 2,3:22,23-dioxidosqualene. The protein is Squalene epoxidase 3 (SQE3) of Arabidopsis thaliana (Mouse-ear cress).